The following is a 630-amino-acid chain: Zinc finger protein MSN4 (630 aa).

N-acetylmethionine is present on Met-1. The segment covering 37-56 has biased composition (low complexity); it reads TTNVSATSSNDNSANNSISS. Disordered regions lie at residues 37–77 and 115–137; these read TTNV…ATNT and FVNDGEKQSSNANGKKNGGDKIY. Ser-178 is modified (phosphoserine). A 9aaTAD motif is present at residues 237–245; it reads SILEDFVSS. Ser-263 is modified (phosphoserine). Residues 292–303 show a composition bias toward polar residues; it reads KNSSNSKPTQQI. Disordered regions lie at residues 292–322 and 360–379; these read KNSSNSKPTQQIIPEGTATTERRGSTISPTT and SISSSLNRISHSSSTTRQQR. 2 positions are modified to phosphoserine: Ser-316 and Ser-319. Residues 360 to 373 show a composition bias toward low complexity; it reads SISSSLNRISHSSS. A Phosphothreonine modification is found at Thr-479. The tract at residues 502 to 566 is disordered; the sequence is TSQAHHAAQH…KSITTIDPNN (65 aa). Residues 504–515 are compositionally biased toward low complexity; sequence QAHHAAQHHQQQ. Composition is skewed to polar residues over residues 516 to 525 and 532 to 547; these read PTKQATVSPN and SSVTLSPTISHNNNNG. Ser-558 carries the phosphoserine modification. 2 C2H2-type zinc fingers span residues 573–596 and 602–624; these read FKCKDCEKAFRRSEHLKRHIRSVH and FACMFCEKKFSRSDNLSQHLKTH.

It is found in the cytoplasm. Its subcellular location is the nucleus. Positive transcriptional factor that acts as a component of the stress responsive system. Recognizes and binds to the stress response element (STRE) which is involved in the response to various forms of stress (heat, oxidative, osmotic, etc.). Involved in the regulation of the CTT1, DDR2, HSP12 genes. This is Zinc finger protein MSN4 (MSN4) from Saccharomyces cerevisiae (strain ATCC 204508 / S288c) (Baker's yeast).